Reading from the N-terminus, the 213-residue chain is Orotate phosphoribosyltransferase (213 aa).

Lysine 26 contributes to the 5-phospho-alpha-D-ribose 1-diphosphate binding site. Residue 34–35 (FF) coordinates orotate. 5-phospho-alpha-D-ribose 1-diphosphate contacts are provided by residues 72–73 (YK), arginine 99, lysine 100, lysine 103, histidine 105, and 124–132 (DDVITAGTA). Residues threonine 128 and arginine 156 each contribute to the orotate site.

Belongs to the purine/pyrimidine phosphoribosyltransferase family. PyrE subfamily. Homodimer. Mg(2+) is required as a cofactor.

The enzyme catalyses orotidine 5'-phosphate + diphosphate = orotate + 5-phospho-alpha-D-ribose 1-diphosphate. It participates in pyrimidine metabolism; UMP biosynthesis via de novo pathway; UMP from orotate: step 1/2. Functionally, catalyzes the transfer of a ribosyl phosphate group from 5-phosphoribose 1-diphosphate to orotate, leading to the formation of orotidine monophosphate (OMP). The sequence is that of Orotate phosphoribosyltransferase from Vibrio parahaemolyticus serotype O3:K6 (strain RIMD 2210633).